Reading from the N-terminus, the 413-residue chain is Probable alpha-amylase 2 (413 aa).

Residues tyrosine 74–leucine 75 and arginine 191–arginine 196 contribute to the substrate site. Residue aspartate 193 is the Nucleophile of the active site. The active-site Proton donor is glutamate 218. Substrate-binding positions include tryptophan 220, serine 222, glutamine 239, aspartate 246, lysine 280, glycine 286 to tryptophan 288, histidine 299, glutamine 305, lysine 386, and tryptophan 411.

Belongs to the glycosyl hydrolase 13 family. The cofactor is Ca(2+). As to expression, expressed in developing siliques.

It localises to the cytoplasm. The protein localises to the cytosol. The enzyme catalyses Endohydrolysis of (1-&gt;4)-alpha-D-glucosidic linkages in polysaccharides containing three or more (1-&gt;4)-alpha-linked D-glucose units.. Its function is as follows. Probable alpha-amylase that does not seem to be required for breakdown of transitory starch in leaves. The sequence is that of Probable alpha-amylase 2 (AMY2) from Arabidopsis thaliana (Mouse-ear cress).